The chain runs to 399 residues: Accessory Sec system protein translocase subunit SecY2 (399 aa).

10 helical membrane passes run 14 to 34 (ILFT…SIVG), 60 to 80 (LNVF…IMLL), 102 to 122 (IITI…YIHN), 128 to 148 (SNII…VWLA), 152 to 172 (ITYG…KSLF), 184 to 204 (VLLL…LLFI), 238 to 258 (ISIM…NLIA), 272 to 292 (FANP…SYLL), 335 to 355 (WTGA…TLLV), and 362 to 382 (IYFS…GETI).

This sequence belongs to the SecY/SEC61-alpha family. SecY2 subfamily. In terms of assembly, component of the accessory SecA2/SecY2 protein translocase complex required to export cell wall proteins. May form heterotrimers with SecE and SecG subunits.

It is found in the cell membrane. In terms of biological role, part of the accessory SecA2/SecY2 system specifically required for export of possible cell wall proteins. The central subunit of a protein translocation channel. This Staphylococcus haemolyticus (strain JCSC1435) protein is Accessory Sec system protein translocase subunit SecY2.